Consider the following 103-residue polypeptide: Protein reprimo A (103 aa).

Residues 50–70 (IVQIAVMCVLSLTVVFGIFFL) form a helical membrane-spanning segment.

This sequence belongs to the reprimo family.

It localises to the cytoplasm. Its subcellular location is the membrane. Its function is as follows. May be involved in the regulation of p53-dependent G2 arrest of the cell cycle. In Danio rerio (Zebrafish), this protein is Protein reprimo A.